The sequence spans 302 residues: Glutamyl-Q tRNA(Asp) synthetase (302 aa).

Residues 13-17 (RFAPS) and Asp-49 contribute to the L-glutamate site. Positions 16 to 26 (PSPTGPLHLGS) match the 'HIGH' region motif. Cys-105, Cys-107, Tyr-119, and Cys-123 together coordinate Zn(2+). Positions 178 and 196 each coordinate L-glutamate. The short motif at 234–238 (KLSKQ) is the 'KMSKS' region element. Lys-237 serves as a coordination point for ATP.

The protein belongs to the class-I aminoacyl-tRNA synthetase family. GluQ subfamily. It depends on Zn(2+) as a cofactor.

Functionally, catalyzes the tRNA-independent activation of glutamate in presence of ATP and the subsequent transfer of glutamate onto a tRNA(Asp). Glutamate is transferred on the 2-amino-5-(4,5-dihydroxy-2-cyclopenten-1-yl) moiety of the queuosine in the wobble position of the QUC anticodon. This is Glutamyl-Q tRNA(Asp) synthetase from Methylococcus capsulatus (strain ATCC 33009 / NCIMB 11132 / Bath).